A 358-amino-acid polypeptide reads, in one-letter code: C-X-C chemokine receptor type 4 (358 aa).

The tract at residues 1 to 25 (MDGFSGGIDINIFDSNSTENGSGDF) is important for chemokine binding and signaling. Over 1–44 (MDGFSGGIDINIFDSNSTENGSGDFEDFSEPCFMHDNSDFNRIF) the chain is Extracellular. Asn16 and Asn20 each carry an N-linked (GlcNAc...) asparagine glycan. Cystine bridges form between Cys32–Cys281 and Cys113–Cys190. A helical transmembrane segment spans residues 45-67 (LPTIYSFIFLLGIIGNGLVVVVM). The Cytoplasmic portion of the chain corresponds to 68–81 (GYQKKSRTMTDKYR). A helical transmembrane segment spans residues 82–103 (LHLSVADLLFVFTLPFWSVDAA). The segment at 98-101 (WSVD) is chemokine binding. Over 104–114 (IGWYFKEFLCK) the chain is Extracellular. A helical membrane pass occupies residues 115–134 (AVHVIYTVNLYSSVLILAFI). The chemokine binding stretch occupies residues 117 to 121 (HVIYT). The Cytoplasmic segment spans residues 135–158 (SLDRYLAIVHATNSQGSRKMLADK). Positions 139 to 151 (YLAIVHATNSQGS) are involved in dimerization; when bound to chemokine. A helical membrane pass occupies residues 159–178 (VVYAGVWLPALLLTVPDLVF). The Extracellular segment spans residues 179-202 (ARVSDENGQFVCDRIYPIDNRETW). Residues 190 to 194 (CDRIY) are chemokine binding, important for signaling. A helical membrane pass occupies residues 203 to 223 (TVGFRFLHITVGLILPGLIIL). Residues 224–248 (ICYCVIISKLSHSKGHQKRKALKTT) are Cytoplasmic-facing. A helical membrane pass occupies residues 249-268 (VILILAFFACWLPYYVCLTT). Residues 269 to 289 (DTFMLLGLLKADCIWENTLHK) are Extracellular-facing. A helical membrane pass occupies residues 290–309 (AISITEALAFFHCCLNPILY). Over 310 to 358 (AFLGAKFKTSAQNAFTSVSRGSSLKILSKKRAGLSSVSTESESSSFHSS) the chain is Cytoplasmic. The tract at residues 338–358 (KKRAGLSSVSTESESSSFHSS) is disordered. Over residues 344 to 358 (SSVSTESESSSFHSS) the composition is skewed to low complexity.

Belongs to the G-protein coupled receptor 1 family. Monomer. Can form dimers. Post-translationally, sulfation is required for efficient binding of cxcl12/sdf-1alpha and promotes its dimerization. In terms of processing, O- and N-glycosylated.

The protein resides in the cell membrane. It localises to the cytoplasm. Its subcellular location is the nucleus. It is found in the early endosome. The protein localises to the late endosome. The protein resides in the lysosome. Functionally, receptor for the C-X-C chemokine cxcl12/sdf-1. Transduces a signal by increasing the intracellular calcium ion level. Signaling with cxcl12/sdf-1 mediates the directional movement of mesodermal cells during gastrulation. May play a role in the migration of embryonic presumptive primordial germ cells (pPGCs). May also be involved in regulating migration of hematopoietic stem cells into the larval liver. This Xenopus tropicalis (Western clawed frog) protein is C-X-C chemokine receptor type 4.